Consider the following 259-residue polypeptide: Ribonuclease T2-B (259 aa).

An N-terminal signal peptide occupies residues 1-29 (MAPAEARGALPGWISVLGWGLALCSLCGA). A disulfide bridge links C53 with C59. The active site involves H69. Cystine bridges form between C79–C125, C188–C244, and C206–C217. N80 and N110 each carry an N-linked (GlcNAc...) asparagine glycan. Active-site residues include E118 and H122. N216 carries an N-linked (GlcNAc...) asparagine glycan.

It belongs to the RNase T2 family.

The protein localises to the secreted. It is found in the lysosome lumen. Its subcellular location is the endoplasmic reticulum lumen. It localises to the mitochondrion intermembrane space. It carries out the reaction a ribonucleotidyl-ribonucleotide-RNA + H2O = a 3'-end 3'-phospho-ribonucleotide-RNA + a 5'-end dephospho-ribonucleoside-RNA + H(+). The enzyme catalyses an adenylyl-uridine-RNA = a 3'-end 2',3'-cyclophospho-AMP-RNA + a 5'-end dephospho-uridine-RNA. The catalysed reaction is a guanylyl-uridine-RNA = a 3'-end 2',3'-cyclophospho-GMP-RNA + a 5'-end dephospho-uridine-RNA. With respect to regulation, inhibited by Zn(2+) and Cu(2+). Ribonuclease that plays an essential role in innate immune response by recognizing and degrading RNAs from microbial pathogens that are subsequently sensed by TLR8. Cleaves preferentially single-stranded RNA molecules between purine and uridine residues, which critically contributes to the supply of catabolic uridine and the generation of purine-2',3'-cyclophosphate-terminated oligoribonucleotides. In turn, RNase T2 degradation products promote the RNA-dependent activation of TLR8. In plasmacytoid dendritic cells, it cooperates with PLD3 or PLD4 5'-&gt;3' exonucleases to process RNA fragments and release 2',3'-cyclic guanosine monophosphate (2',3'-cGMP), a potent stimulatory ligand for TLR7. Also plays a key role in degradation of mitochondrial RNA and processing of non-coding RNA imported from the cytosol into mitochondria. Participates as well in degradation of mitochondrion-associated cytosolic rRNAs. The chain is Ribonuclease T2-B from Mus musculus (Mouse).